Reading from the N-terminus, the 678-residue chain is Platelet endothelial cell adhesion molecule (678 aa).

The N-terminal stretch at 1 to 17 is a signal peptide; sequence MLLALLLTMLLYASLQA. Residues 18 to 589 lie on the Extracellular side of the membrane; it reads QENSFTINSI…VRVFLAPWKK (572 aa). 6 consecutive Ig-like C2-type domains span residues 40 to 126, 135 to 213, 225 to 309, 315 to 391, 413 to 472, and 488 to 577; these read GQKL…PEVT, GGIV…FIRS, PKFQ…ILVN, PRPK…LVPV, GQII…NCHS, and PVDE…RSGP. A disulfide bridge connects residues cysteine 47 and cysteine 99. Asparagine 74 and asparagine 141 each carry an N-linked (GlcNAc...) asparagine glycan. Cystine bridges form between cysteine 142–cysteine 195 and cysteine 245–cysteine 293. N-linked (GlcNAc...) asparagine glycans are attached at residues asparagine 309, asparagine 345, asparagine 360, asparagine 424, and asparagine 540. 3 cysteine pairs are disulfide-bonded: cysteine 336–cysteine 375, cysteine 420–cysteine 465, and cysteine 512–cysteine 561. Residues 590-610 form a helical membrane-spanning segment; the sequence is GLIAVVVIGVVIAALIVAAKY. Topologically, residues 611–678 are cytoplasmic; it reads YFLRKAKAKQ…EPHQENGRLP (68 aa). A disordered region spans residues 634-653; that stretch reads NSNSEKVSEPSVETNSHYDS. An ITIM motif motif is present at residues 658-663; the sequence is VEYTEV. A Phosphotyrosine; by FER modification is found at tyrosine 660.

Trans-homodimer (via Ig-like C2-type 1 and Ig-like C2-type 2 domains); trans-homodimerization is required for cell-cell interaction. Forms a complex with BDKRB2 and GNAQ. Interacts with BDKRB2 and GNAQ. Interacts with PTPN11. Interacts with FER. Interacts with CD177; the interaction is Ca(2+)-dependent; the interaction is direct. Post-translationally, phosphorylated on Ser and Tyr residues after cellular activation. In endothelial cells Fyn mediates mechanical-force (stretch or pull) induced tyrosine phosphorylation. Phosphorylated on tyrosine residues by FER and FES in response to FCER1 activation. Palmitoylation by ZDHHC21 is necessary for cell surface expression in endothelial cells and enrichment in membrane rafts.

The protein resides in the cell membrane. Its subcellular location is the membrane raft. The protein localises to the cell junction. In terms of biological role, cell adhesion molecule which is required for leukocyte transendothelial migration (TEM) under most inflammatory conditions. Tyr-660 plays a critical role in TEM and is required for efficient trafficking of PECAM1 to and from the lateral border recycling compartment (LBRC) and is also essential for the LBRC membrane to be targeted around migrating leukocytes. Trans-homophilic interaction may play a role in endothelial cell-cell adhesion via cell junctions. Heterophilic interaction with CD177 plays a role in transendothelial migration of neutrophils. Homophilic ligation of PECAM1 prevents macrophage-mediated phagocytosis of neighboring viable leukocytes by transmitting a detachment signal. Promotes macrophage-mediated phagocytosis of apoptotic leukocytes by tethering them to the phagocytic cells; PECAM1-mediated detachment signal appears to be disabled in apoptotic leukocytes. Modulates bradykinin receptor BDKRB2 activation. Regulates bradykinin- and hyperosmotic shock-induced ERK1/2 activation in endothelial cells. Induces susceptibility to atherosclerosis. The chain is Platelet endothelial cell adhesion molecule (Pecam1) from Rattus norvegicus (Rat).